A 588-amino-acid chain; its full sequence is L-fucose isomerase (588 aa).

Catalysis depends on proton acceptor residues glutamate 335 and aspartate 359. Residues glutamate 335, aspartate 359, and histidine 525 each contribute to the Mn(2+) site.

The protein belongs to the L-fucose isomerase family. Mn(2+) serves as cofactor.

It localises to the cytoplasm. It carries out the reaction L-fucose = L-fuculose. Its pathway is carbohydrate degradation; L-fucose degradation; L-lactaldehyde and glycerone phosphate from L-fucose: step 1/3. In terms of biological role, converts the aldose L-fucose into the corresponding ketose L-fuculose. In Streptococcus pneumoniae serotype 2 (strain D39 / NCTC 7466), this protein is L-fucose isomerase.